Here is a 251-residue protein sequence, read N- to C-terminus: MDHAIYTAMGAASQTLNQQAVTASNLANASTPGFRAQLNALRAVPVDGLSLATRTLVTASTPGADMTPGQLDYTSRPLDVALQQDGWLVVQAADGAEGYTRNGNIQVGPTGQLTIQGHPVIGEGGPITVPEGSEITIAADGTISALNPGDPPNTVAPVGRLKLVKAEGNEVQRSDDGLFRLTAEAQAERGAVLAADPSIRIMSGVLEGSNVKPVEAMTDMIANARRFEMQMKVITSVDENEGRANQLLSMS.

This sequence belongs to the flagella basal body rod proteins family. The basal body constitutes a major portion of the flagellar organelle and consists of five rings (E,L,P,S, and M) mounted on a central rod. The rod consists of about 26 subunits of FlgG in the distal portion, and FlgB, FlgC and FlgF are thought to build up the proximal portion of the rod with about 6 subunits each.

It is found in the bacterial flagellum basal body. The protein is Flagellar basal-body rod protein FlgF (flgF) of Salmonella typhimurium (strain LT2 / SGSC1412 / ATCC 700720).